The chain runs to 372 residues: Mitogen-activated protein kinase homolog NTF3 (372 aa).

Residues 32–319 (YVPIKPIGRG…VIEALQHPYM (288 aa)) form the Protein kinase domain. ATP is bound by residues 38–46 (IGRGAYGIV) and K61. The active-site Proton acceptor is D158. T191 is subject to Phosphothreonine. The short motif at 191-193 (TEY) is the TXY element. Residue Y193 is modified to Phosphotyrosine.

The protein belongs to the protein kinase superfamily. CMGC Ser/Thr protein kinase family. MAP kinase subfamily. The cofactor is Mg(2+). In terms of processing, dually phosphorylated on Thr-191 and Tyr-193, which activates the enzyme. Very low autophosphorylation, although dramatically increased when Mn(2+) is added to the reaction instead of Mg(2+). In terms of tissue distribution, ubiquitous.

It carries out the reaction L-seryl-[protein] + ATP = O-phospho-L-seryl-[protein] + ADP + H(+). The catalysed reaction is L-threonyl-[protein] + ATP = O-phospho-L-threonyl-[protein] + ADP + H(+). Its activity is regulated as follows. Activated by tyrosine and threonine phosphorylation. This Nicotiana tabacum (Common tobacco) protein is Mitogen-activated protein kinase homolog NTF3 (NTF3).